The following is a 142-amino-acid chain: Hemoglobin subunit beta-C (142 aa).

The Globin domain maps to 1–142 (MPNKALITGF…VASALAHRYH (142 aa)). Residues His59 and His88 each coordinate heme b.

This sequence belongs to the globin family. As to quaternary structure, heterotetramer of two alpha chains and two beta chains. As to expression, red blood cells.

Involved in oxygen transport from the lung to the various peripheral tissues. The chain is Hemoglobin subunit beta-C (HBBC) from Capra hircus (Goat).